The following is a 430-amino-acid chain: Probable carboxypeptidase AO090003000058 (430 aa).

Positions 1–16 (MKSIYSLVLCTALTAA) are cleaved as a signal peptide. N-linked (GlcNAc...) asparagine glycosylation occurs at Asn-84. Asp-156 lines the Zn(2+) pocket. The active-site Proton acceptor is the Glu-188. Glu-189 lines the Zn(2+) pocket. A glycan (N-linked (GlcNAc...) asparagine) is linked at Asn-285.

This sequence belongs to the peptidase M20A family. It depends on Zn(2+) as a cofactor.

The protein resides in the secreted. This Aspergillus oryzae (strain ATCC 42149 / RIB 40) (Yellow koji mold) protein is Probable carboxypeptidase AO090003000058.